The chain runs to 484 residues: TPR repeat-containing protein YvcD (484 aa).

3 TPR repeats span residues 21–54 (GQYF…EPED), 55–88 (SEML…LEAE), and 187–220 (WSAY…NEGN).

The sequence is that of TPR repeat-containing protein YvcD (yvcD) from Bacillus subtilis (strain 168).